A 298-amino-acid polypeptide reads, in one-letter code: Elongation factor Ts (298 aa).

Residues 79-82 are involved in Mg(2+) ion dislocation from EF-Tu; sequence TDFV.

This sequence belongs to the EF-Ts family.

The protein localises to the cytoplasm. Functionally, associates with the EF-Tu.GDP complex and induces the exchange of GDP to GTP. It remains bound to the aminoacyl-tRNA.EF-Tu.GTP complex up to the GTP hydrolysis stage on the ribosome. In Cereibacter sphaeroides (strain ATCC 17029 / ATH 2.4.9) (Rhodobacter sphaeroides), this protein is Elongation factor Ts.